The chain runs to 233 residues: Large ribosomal subunit protein uL1 (233 aa).

This sequence belongs to the universal ribosomal protein uL1 family. As to quaternary structure, part of the 50S ribosomal subunit.

Its function is as follows. Binds directly to 23S rRNA. The L1 stalk is quite mobile in the ribosome, and is involved in E site tRNA release. In terms of biological role, protein L1 is also a translational repressor protein, it controls the translation of the L11 operon by binding to its mRNA. The chain is Large ribosomal subunit protein uL1 from Shewanella woodyi (strain ATCC 51908 / MS32).